Here is a 725-residue protein sequence, read N- to C-terminus: Ribosomal RNA large subunit methyltransferase K/L (725 aa).

The THUMP domain maps to 46-157 (VAYRLCLWSR…RGQATLSLDL (112 aa)).

Belongs to the methyltransferase superfamily. RlmKL family.

Its subcellular location is the cytoplasm. The catalysed reaction is guanosine(2445) in 23S rRNA + S-adenosyl-L-methionine = N(2)-methylguanosine(2445) in 23S rRNA + S-adenosyl-L-homocysteine + H(+). It catalyses the reaction guanosine(2069) in 23S rRNA + S-adenosyl-L-methionine = N(2)-methylguanosine(2069) in 23S rRNA + S-adenosyl-L-homocysteine + H(+). Functionally, specifically methylates the guanine in position 2445 (m2G2445) and the guanine in position 2069 (m7G2069) of 23S rRNA. This Pseudomonas aeruginosa (strain ATCC 15692 / DSM 22644 / CIP 104116 / JCM 14847 / LMG 12228 / 1C / PRS 101 / PAO1) protein is Ribosomal RNA large subunit methyltransferase K/L.